A 508-amino-acid chain; its full sequence is uncharacterized protein (508 aa).

A run of 12 helical transmembrane segments spans residues 65–87 (IFPV…SYAV), 104–124 (WSGT…SLLL), 136–156 (FLVI…PGFI), 160–180 (VLLG…TAQW), 192–212 (VWVA…YGLA), 224–244 (LIFI…LAVV), 292–312 (TWIM…IGTF), 333–353 (LPAG…SLFI), 357–377 (MVLA…LSFA), 384–404 (LAGY…FAII), 416–436 (TVGV…PQTF), and 450–470 (TMVG…YVNW).

This sequence belongs to the major facilitator superfamily. Allantoate permease family.

It is found in the endoplasmic reticulum. The protein localises to the golgi apparatus. Its subcellular location is the membrane. This is an uncharacterized protein from Schizosaccharomyces pombe (strain 972 / ATCC 24843) (Fission yeast).